Here is a 234-residue protein sequence, read N- to C-terminus: Ubiquinone biosynthesis O-methyltransferase (234 aa).

The S-adenosyl-L-methionine site is built by arginine 40, glycine 59, aspartate 80, and methionine 123.

Belongs to the methyltransferase superfamily. UbiG/COQ3 family.

The enzyme catalyses a 3-demethylubiquinol + S-adenosyl-L-methionine = a ubiquinol + S-adenosyl-L-homocysteine + H(+). The catalysed reaction is a 3-(all-trans-polyprenyl)benzene-1,2-diol + S-adenosyl-L-methionine = a 2-methoxy-6-(all-trans-polyprenyl)phenol + S-adenosyl-L-homocysteine + H(+). The protein operates within cofactor biosynthesis; ubiquinone biosynthesis. O-methyltransferase that catalyzes the 2 O-methylation steps in the ubiquinone biosynthetic pathway. In Coxiella burnetii (strain Dugway 5J108-111), this protein is Ubiquinone biosynthesis O-methyltransferase.